The sequence spans 571 residues: Proline--tRNA ligase (571 aa).

It belongs to the class-II aminoacyl-tRNA synthetase family. ProS type 1 subfamily. In terms of assembly, homodimer.

The protein resides in the cytoplasm. The enzyme catalyses tRNA(Pro) + L-proline + ATP = L-prolyl-tRNA(Pro) + AMP + diphosphate. Catalyzes the attachment of proline to tRNA(Pro) in a two-step reaction: proline is first activated by ATP to form Pro-AMP and then transferred to the acceptor end of tRNA(Pro). As ProRS can inadvertently accommodate and process non-cognate amino acids such as alanine and cysteine, to avoid such errors it has two additional distinct editing activities against alanine. One activity is designated as 'pretransfer' editing and involves the tRNA(Pro)-independent hydrolysis of activated Ala-AMP. The other activity is designated 'posttransfer' editing and involves deacylation of mischarged Ala-tRNA(Pro). The misacylated Cys-tRNA(Pro) is not edited by ProRS. The polypeptide is Proline--tRNA ligase (Shewanella baltica (strain OS195)).